The primary structure comprises 519 residues: Protein nucleotidyltransferase YdiU (519 aa).

Residues Gly-101, Gly-103, Arg-104, Lys-123, Asp-135, Gly-136, Arg-193, and Arg-200 each coordinate ATP. Asp-271 acts as the Proton acceptor in catalysis. Positions 272 and 281 each coordinate Mg(2+). Asp-281 lines the ATP pocket.

It belongs to the SELO family. It depends on Mg(2+) as a cofactor. Requires Mn(2+) as cofactor.

The catalysed reaction is L-seryl-[protein] + ATP = 3-O-(5'-adenylyl)-L-seryl-[protein] + diphosphate. The enzyme catalyses L-threonyl-[protein] + ATP = 3-O-(5'-adenylyl)-L-threonyl-[protein] + diphosphate. It carries out the reaction L-tyrosyl-[protein] + ATP = O-(5'-adenylyl)-L-tyrosyl-[protein] + diphosphate. It catalyses the reaction L-histidyl-[protein] + UTP = N(tele)-(5'-uridylyl)-L-histidyl-[protein] + diphosphate. The catalysed reaction is L-seryl-[protein] + UTP = O-(5'-uridylyl)-L-seryl-[protein] + diphosphate. The enzyme catalyses L-tyrosyl-[protein] + UTP = O-(5'-uridylyl)-L-tyrosyl-[protein] + diphosphate. Functionally, nucleotidyltransferase involved in the post-translational modification of proteins. It can catalyze the addition of adenosine monophosphate (AMP) or uridine monophosphate (UMP) to a protein, resulting in modifications known as AMPylation and UMPylation. This Tolumonas auensis (strain DSM 9187 / NBRC 110442 / TA 4) protein is Protein nucleotidyltransferase YdiU.